We begin with the raw amino-acid sequence, 123 residues long: Large ribosomal subunit protein uL18 (123 aa).

The protein belongs to the universal ribosomal protein uL18 family. Part of the 50S ribosomal subunit; part of the 5S rRNA/L5/L18/L25 subcomplex. Contacts the 5S and 23S rRNAs.

Its function is as follows. This is one of the proteins that bind and probably mediate the attachment of the 5S RNA into the large ribosomal subunit, where it forms part of the central protuberance. This Chlamydia pneumoniae (Chlamydophila pneumoniae) protein is Large ribosomal subunit protein uL18.